The chain runs to 230 residues: Exosome complex component Rrp4 (230 aa).

An S1 motif domain is found at 60–129 (NDKVIGKVID…EIKESWLSLK (70 aa)). A KH domain is found at 137–195 (EEGSIIYIKAPKVPRVIGKAGNMINMIKSETNTKIIVGQNGLIWIDGEPENVDLAINAI).

This sequence belongs to the RRP4 family. As to quaternary structure, component of the archaeal exosome complex. Forms a trimer of Rrp4 and/or Csl4 subunits. The trimer associates with a hexameric ring-like arrangement composed of 3 Rrp41-Rrp42 heterodimers.

The protein localises to the cytoplasm. Functionally, non-catalytic component of the exosome, which is a complex involved in RNA degradation. Increases the RNA binding and the efficiency of RNA degradation. Confers strong poly(A) specificity to the exosome. The polypeptide is Exosome complex component Rrp4 (Picrophilus torridus (strain ATCC 700027 / DSM 9790 / JCM 10055 / NBRC 100828 / KAW 2/3)).